We begin with the raw amino-acid sequence, 331 residues long: Isopenicillin N synthase (331 aa).

Isopenicillin N contacts are provided by Arg-87, Tyr-91, Ser-183, and Tyr-189. 6 residues coordinate N-[(5S)-5-amino-5-carboxypentanoyl]-L-cysteinyl-D-valine: Arg-87, Tyr-91, Ser-183, Tyr-189, His-214, and Asp-216. The Fe2OG dioxygenase domain maps to 176–288 (KKEDALSSVV…RQSLPFFVNL (113 aa)). His-214, Asp-216, and His-270 together coordinate Fe(2+). Arg-279 contacts 2-oxoglutarate. Ser-281 contributes to the isopenicillin N binding site. Ser-281 provides a ligand contact to N-[(5S)-5-amino-5-carboxypentanoyl]-L-cysteinyl-D-valine.

It belongs to the iron/ascorbate-dependent oxidoreductase family. As to quaternary structure, monomer. Requires Fe(2+) as cofactor.

Its subcellular location is the cytoplasm. The protein resides in the cytosol. It catalyses the reaction N-[(5S)-5-amino-5-carboxypentanoyl]-L-cysteinyl-D-valine + O2 = isopenicillin N + 2 H2O. The protein operates within antibiotic biosynthesis; penicillin G biosynthesis; penicillin G from L-alpha-aminoadipate and L-cysteine and L-valine: step 2/3. Isopenicillin N synthase; part of the gene cluster that mediates the biosynthesis of penicillin, the world's most important antibiotic. IpnA catalyzes the cyclization of the tripeptide N-[(5S)-5-amino-5-carboxypentanoyl]-L-cysteinyl-D-valine (LLD-ACV or ACV) to form isopenicillin N (IPN) that contains the beta-lactam nucleus. The penicillin biosynthesis occurs via 3 enzymatic steps, the first corresponding to the production of the tripeptide N-[(5S)-5-amino-5-carboxypentanoyl]-L-cysteinyl-D-valine (LLD-ACV or ACV) by the NRPS acvA. The tripeptide ACV is then cyclized to isopenicillin N (IPN) by the isopenicillin N synthase ipnA that forms the beta-lactam nucleus. Finally, the alpha-aminoadipyl side chain is exchanged for phenylacetic acid by the isopenicillin N acyltransferase aatA to yield penicillin in the peroxisomal matrix. This chain is Isopenicillin N synthase, found in Penicillium chrysogenum (Penicillium notatum).